The following is a 410-amino-acid chain: Phospho-N-acetylmuramoyl-pentapeptide-transferase (410 aa).

10 consecutive transmembrane segments (helical) span residues 23–43 (YITF…TIYG), 73–93 (TPTM…FLFA), 96–116 (HNIY…IGFV), 132–152 (GIFK…VLYF), 215–235 (WAWL…SNGA), 248–268 (TSAV…NIIF), 285–305 (VFIS…SFPA), 307–327 (VFMG…LAIA), 332–352 (ILIV…IIQV), and 387–407 (KIVT…IVTL).

Belongs to the glycosyltransferase 4 family. MraY subfamily. It depends on Mg(2+) as a cofactor.

The protein localises to the cell inner membrane. It carries out the reaction UDP-N-acetyl-alpha-D-muramoyl-L-alanyl-gamma-D-glutamyl-meso-2,6-diaminopimeloyl-D-alanyl-D-alanine + di-trans,octa-cis-undecaprenyl phosphate = di-trans,octa-cis-undecaprenyl diphospho-N-acetyl-alpha-D-muramoyl-L-alanyl-D-glutamyl-meso-2,6-diaminopimeloyl-D-alanyl-D-alanine + UMP. The protein operates within cell wall biogenesis; peptidoglycan biosynthesis. Functionally, catalyzes the initial step of the lipid cycle reactions in the biosynthesis of the cell wall peptidoglycan: transfers peptidoglycan precursor phospho-MurNAc-pentapeptide from UDP-MurNAc-pentapeptide onto the lipid carrier undecaprenyl phosphate, yielding undecaprenyl-pyrophosphoryl-MurNAc-pentapeptide, known as lipid I. The polypeptide is Phospho-N-acetylmuramoyl-pentapeptide-transferase (Flavobacterium johnsoniae (strain ATCC 17061 / DSM 2064 / JCM 8514 / BCRC 14874 / CCUG 350202 / NBRC 14942 / NCIMB 11054 / UW101) (Cytophaga johnsonae)).